The chain runs to 175 residues: Peptide methionine sulfoxide reductase MsrA (175 aa).

Residue cysteine 10 is part of the active site.

Belongs to the MsrA Met sulfoxide reductase family.

It carries out the reaction L-methionyl-[protein] + [thioredoxin]-disulfide + H2O = L-methionyl-(S)-S-oxide-[protein] + [thioredoxin]-dithiol. The enzyme catalyses [thioredoxin]-disulfide + L-methionine + H2O = L-methionine (S)-S-oxide + [thioredoxin]-dithiol. Functionally, has an important function as a repair enzyme for proteins that have been inactivated by oxidation. Catalyzes the reversible oxidation-reduction of methionine sulfoxide in proteins to methionine. This chain is Peptide methionine sulfoxide reductase MsrA, found in Psychrobacter sp. (strain PRwf-1).